We begin with the raw amino-acid sequence, 70 residues long: DNA-directed RNA polymerase subunit omega (70 aa).

The protein belongs to the RNA polymerase subunit omega family. In terms of assembly, the RNAP catalytic core consists of 2 alpha, 1 beta, 1 beta' and 1 omega subunit. When a sigma factor is associated with the core the holoenzyme is formed, which can initiate transcription.

The enzyme catalyses RNA(n) + a ribonucleoside 5'-triphosphate = RNA(n+1) + diphosphate. Promotes RNA polymerase assembly. Latches the N- and C-terminal regions of the beta' subunit thereby facilitating its interaction with the beta and alpha subunits. This chain is DNA-directed RNA polymerase subunit omega, found in Staphylococcus epidermidis (strain ATCC 12228 / FDA PCI 1200).